A 418-amino-acid chain; its full sequence is MGKTMAEKILSRASGEDAEAGDIVVANIDVAMVHDITGPITVQRLEEMGVERVWDPSKIVVLFDHQVPADSVEAAENHKIMREFVEEQGIEHFYDVREGVCHQVLPEKGHVRPGDVIVGADSHTCTHGALGAFATGIGSTDMAAVFATGKLWFRVPETYRVEITGELPEGVYAKDVVLKVTGEIGADGATYMAIEYHGEVVREMSVSDRMCLCNMAIEMGAKTGMVPPDEKTLEYVKKRAGTEGRPVEPDPDARYEAELTLDVSDLEPQVAKPFSPDNVVPVGEVEGIAIDQVFIGSCTNGRYEDLKVAAEVLEGEEVHDDVRLIVIPASREVYHRTLKDGVLEVLHEAGALICPPNCGPCLGGHMGVLAEGERCVATSNRNFPGRMGHRESEVYLASPATAAASAIEGEITDPRPYL.

Cys-298, Cys-358, and Cys-361 together coordinate [4Fe-4S] cluster.

Belongs to the aconitase/IPM isomerase family. LeuC type 2 subfamily. As to quaternary structure, heterodimer of LeuC and LeuD. The cofactor is [4Fe-4S] cluster.

It catalyses the reaction (2R,3S)-3-isopropylmalate = (2S)-2-isopropylmalate. It participates in amino-acid biosynthesis; L-leucine biosynthesis; L-leucine from 3-methyl-2-oxobutanoate: step 2/4. Its function is as follows. Catalyzes the isomerization between 2-isopropylmalate and 3-isopropylmalate, via the formation of 2-isopropylmaleate. The polypeptide is 3-isopropylmalate dehydratase large subunit 1 (Methanopyrus kandleri (strain AV19 / DSM 6324 / JCM 9639 / NBRC 100938)).